We begin with the raw amino-acid sequence, 282 residues long: Protein canopy homolog 3 (282 aa).

Residues 1-33 form the signal peptide; it reads MEPLPEPASGPRPRPHRLLLLSLLLLLLPLLPA. Positions 53-275 constitute a Saposin B-type domain; that stretch reads SKCEVCKYVA…EGIQKASPLT (223 aa). 3 disulfide bridges follow: Cys-55/Cys-212, Cys-58/Cys-200, and Cys-110/Cys-172. Residue Asn-159 is glycosylated (N-linked (GlcNAc...) asparagine). A coiled-coil region spans residues 159–185; that stretch reads NETSAEVADLKKQCDVLVEEFEEVIED. The interval 221–282 is disordered; it reads KGDTAALGGK…PLTHSPPDEL (62 aa). Over residues 255–266 the composition is skewed to acidic residues; it reads DLDGDPSPEEDE.

This sequence belongs to the canopy family. As to quaternary structure, interacts with HSP90B1; this interaction is disrupted in the presence of ATP. Interacts with TLR1, TLR2, TLR4 and TLR9.

The protein resides in the endoplasmic reticulum. Its function is as follows. Toll-like receptor (TLR)-specific co-chaperone for HSP90B1. Required for proper TLR folding, except that of TLR3, and hence controls TLR exit from the endoplasmic reticulum. Consequently, required for both innate and adaptive immune responses. This chain is Protein canopy homolog 3 (CNPY3), found in Bos taurus (Bovine).